We begin with the raw amino-acid sequence, 145 residues long: Small ribosomal subunit protein eS19 (145 aa).

It belongs to the eukaryotic ribosomal protein eS19 family. In terms of assembly, part of the 30S ribosomal subunit.

Functionally, may be involved in maturation of the 30S ribosomal subunit. This chain is Small ribosomal subunit protein eS19, found in Methanothermobacter thermautotrophicus (strain ATCC 29096 / DSM 1053 / JCM 10044 / NBRC 100330 / Delta H) (Methanobacterium thermoautotrophicum).